A 450-amino-acid polypeptide reads, in one-letter code: Chromosomal replication initiator protein DnaA (450 aa).

The domain I, interacts with DnaA modulators stretch occupies residues 1–76 (MNLNDILKEL…KKILKQPVNI (76 aa)). Positions 76–107 (ISFTYEQEYQKQLEKTESINKDHSDIISKKNK) are domain II. The domain III, AAA+ region stretch occupies residues 108–327 (KVNENTFENF…GSVSRLNFWS (220 aa)). Positions 151, 153, 154, and 155 each coordinate ATP. Positions 328-450 (QQNPEEKVIT…DILKNKILTK (123 aa)) are domain IV, binds dsDNA.

The protein belongs to the DnaA family. As to quaternary structure, oligomerizes as a right-handed, spiral filament on DNA at oriC.

The protein resides in the cytoplasm. It is found in the cell membrane. Its function is as follows. Plays an essential role in the initiation and regulation of chromosomal replication. ATP-DnaA binds to the origin of replication (oriC) to initiate formation of the DNA replication initiation complex once per cell cycle. Binds the DnaA box (a 9 base pair repeat at the origin) and separates the double-stranded (ds)DNA. Forms a right-handed helical filament on oriC DNA; dsDNA binds to the exterior of the filament while single-stranded (ss)DNA is stabiized in the filament's interior. The ATP-DnaA-oriC complex binds and stabilizes one strand of the AT-rich DNA unwinding element (DUE), permitting loading of DNA polymerase. After initiation quickly degrades to an ADP-DnaA complex that is not apt for DNA replication. Binds acidic phospholipids. The sequence is that of Chromosomal replication initiator protein DnaA from Mycoplasma capricolum subsp. capricolum (strain California kid / ATCC 27343 / NCTC 10154).